A 481-amino-acid chain; its full sequence is MVMAAKKGPGPGGGVSGGKAEAEAASEVWCRRVRELGGCSQAGNRHCFECAQRGVTYVDITVGSFVCTTCSGLLRGLNPPHRVKSISMTTFTEPEVVFLQSRGNEVCRKIWLGLFDARTSLVPDSRDPQKVKEFLQEKYEKKRWYVPPDQVKGPTYTKGSASTPVQGSIPEGKPLRTLLGDPAPSLSVAASTSSQPVSQSHARTSQARSTQPPPHSSVKKASTDLLADIGGDPFAAPQMAPAFAAFPAFGGQTPSQGGFANFDAFSSGPSSSVFGSLPPAGQASFQAQPTPAGSSQGTPFGATPLAPASQPNSLADVGSFLGPGVPAAGVPSSLFGMAGQVPPLQSVTMGGGGGSSTGLAFGAFTNPFTAPAAQSPLPSTNPFQPNGLAPGPGFGMSSAGPGFPQAVPPTGAFASSFPAPLFPPQTPLVQQQNGSSFGDLGSAKLGQRPLSQPAGISTNPFMTGPSSSPFASKPPTTNPFL.

In terms of domain architecture, Arf-GAP spans glutamate 27–glycine 153. The segment at cysteine 47–cysteine 70 adopts a C4-type zinc-finger fold. Disordered stretches follow at residues glutamine 150–lysine 220, serine 271–serine 309, and glutamine 431–leucine 481. Residues threonine 157–glutamine 166 show a composition bias toward polar residues. The residue at position 173 (lysine 173) is an N6-acetyllysine. Polar residues-rich tracts occupy residues valine 188–threonine 210, alanine 283–threonine 298, and alanine 454–leucine 481.

As to quaternary structure, interacts with EPS15R.

In Homo sapiens (Human), this protein is Arf-GAP domain and FG repeat-containing protein 2 (AGFG2).